A 117-amino-acid polypeptide reads, in one-letter code: Immunoglobulin heavy variable 4-4 (117 aa).

The N-terminal stretch at 1-19 (MKHLWFFLLLVAAPRWVLS) is a signal peptide. Positions 20–44 (QVQLQESGPGLVKPSGTLSLTCAVS) are framework-1. Residues 20–117 (QVQLQESGPG…ADTAVYYCAR (98 aa)) enclose the Ig-like domain. A disulfide bridge links Cys-41 with Cys-115. A complementarity-determining-1 region spans residues 45-53 (GGSISSSNW). The interval 54–70 (WSWVRQPPGKGLEWIGE) is framework-2. Residues 71–77 (IYHSGST) form a complementarity-determining-2 region. The framework-3 stretch occupies residues 78-115 (NYNPSLKSRVTISVDKSKNQFSLKLSSVTAADTAVYYC). The interval 116 to 117 (AR) is complementarity-determining-3.

As to quaternary structure, immunoglobulins are composed of two identical heavy chains and two identical light chains; disulfide-linked.

The protein localises to the secreted. Its subcellular location is the cell membrane. Functionally, v region of the variable domain of immunoglobulin heavy chains that participates in the antigen recognition. Immunoglobulins, also known as antibodies, are membrane-bound or secreted glycoproteins produced by B lymphocytes. In the recognition phase of humoral immunity, the membrane-bound immunoglobulins serve as receptors which, upon binding of a specific antigen, trigger the clonal expansion and differentiation of B lymphocytes into immunoglobulins-secreting plasma cells. Secreted immunoglobulins mediate the effector phase of humoral immunity, which results in the elimination of bound antigens. The antigen binding site is formed by the variable domain of one heavy chain, together with that of its associated light chain. Thus, each immunoglobulin has two antigen binding sites with remarkable affinity for a particular antigen. The variable domains are assembled by a process called V-(D)-J rearrangement and can then be subjected to somatic hypermutations which, after exposure to antigen and selection, allow affinity maturation for a particular antigen. This is Immunoglobulin heavy variable 4-4 from Homo sapiens (Human).